Here is a 600-residue protein sequence, read N- to C-terminus: Proton channel OTOP1 (600 aa).

The tract at residues 1–50 is disordered; sequence MPGDRGALSSPAASSGSPSAAPSGIAACPPPPSPLARASPQASGPRRGAS. Over 1–56 the chain is Cytoplasmic; sequence MPGDRGALSSPAASSGSPSAAPSGIAACPPPPSPLARASPQASGPRRGASVPQKLA. The segment covering 7 to 27 has biased composition (low complexity); that stretch reads ALSSPAASSGSPSAAPSGIAA. A helical transmembrane segment spans residues 57-78; the sequence is ETLSSQYGLNVFVAGLLFLLAW. Residues 79-86 lie on the Extracellular side of the membrane; sequence AVHATGVG. Residues 87-110 traverse the membrane as a helical segment; the sequence is KSDLLCVLTALMLLQLLWMLWYVG. Over 111 to 128 the chain is Cytoplasmic; sequence RSYMQRRLIRPKDTHAGA. Residues 129–151 form a helical membrane-spanning segment; it reads RWLRGSITLFAFITIVLGCLKVA. At 152 to 161 the chain is on the extracellular side; the sequence is YFIGFSECLS. A helical membrane pass occupies residues 162 to 186; that stretch reads ATEGVFPVTHAVHTLLQVYFLWGHA. The Cytoplasmic segment spans residues 187-194; that stretch reads KDIIMSFK. The chain crosses the membrane as a helical span at residues 195-221; the sequence is TLERFGVIHSVFTNLLLWANSVLNESK. Residues 222-262 lie on the Extracellular side of the membrane; sequence HQLNEHKERLITLGFGNITIVLDDHTPQCNCTPPALCSALS. The chain crosses the membrane as a helical span at residues 263–288; sequence HGIYYLYPFNIEYQILASTMLYVLWK. The Cytoplasmic portion of the chain corresponds to 289–309; it reads NIGRRVDSSRHQKMQCRFDGV. The helical transmembrane segment at 310–332 threads the bilayer; sequence LVGSVLGLTVLAATIAVVVVYMI. The Extracellular portion of the chain corresponds to 333–342; sequence HIGRSKSKSE. The helical transmembrane segment at 343-368 threads the bilayer; it reads SALIMFYLYAITVLLLMGAAGLVGSW. The Cytoplasmic segment spans residues 369 to 386; it reads IYRVDEKSLDESKNPARK. A helical membrane pass occupies residues 387–411; that stretch reads LDADLLVATASGSWLLSWGSILAIA. Residues 412-421 lie on the Extracellular side of the membrane; that stretch reads CAETRPPYTW. The helical transmembrane segment at 422–442 threads the bilayer; sequence YNLPYSVLVIVEKYVQNIFII. The Cytoplasmic portion of the chain corresponds to 443–532; sequence ESVHLEPEGV…QGGMKRRLLR (90 aa). The helical transmembrane segment at 533–551 threads the bilayer; sequence NITAFLFLCNISLWIPPAF. The Extracellular portion of the chain corresponds to 552–569; sequence GCRPEYDNGLEEIVFGFE. The chain crosses the membrane as a helical span at residues 570–593; it reads PWIIVVNLAMPFSIFYRMHAAAAL. The Cytoplasmic segment spans residues 594 to 600; it reads FEVYCKI.

The protein belongs to the otopetrin family. In terms of assembly, homodimer. Interacts with STAT1, independently of STAT1 phosphorylation status.

Its subcellular location is the cell membrane. The protein localises to the cell projection. It is found in the microvillus. The enzyme catalyses H(+)(in) = H(+)(out). With respect to regulation, activated by both acid and alkali, with proton influx in response to extracellular acid and proton efflux during alkali stimulation. Inhibited by Zn(2+); this inhibition is thought to be pH-sensitive. Currents evoked in response to mild acid (pH 6.0) stimulus may also be mildly potentiated by exposure to Zn(2+). Activated by NH(4)Cl. Proton-selective ion channel. Biphasically modulated by acid and alkali, mediating proton influx and efflux in response to extracellular acid and base stimulation, respectively. Sour taste receptor, which carries inward currents in response to extracellular acidification. Sensor for ammonium chloride (NH(4)Cl) in taste receptor cells. NH(4)Cl acts by increasing the intracellular pH, thereby generating a driving force for proton entry through OTOP1 channel. Might also participate in alkaline sensation. Plays a role in the regulation of Ca(2+) flux in response to purigenic (ATP, ADP and UDP) stimuli, leading to increase in cytosolic Ca(2+) due to influx of extracellular calcium. May play this role by inhibiting P2Y purinoceptor-mediated Ca(2+) release in a Ca(2+)-dependent manner and promote an influx of Ca(2+) in response to ATP. Through this mechanism and possibly others, plays a role in the formation and function of calcium carbonate-based structures in the vestibular system of the inner ear, called otoconia, that sense gravity and linear acceleration. In obesity, may attenuate adipose tissue inflammation, through the negative regulation of IFNG signaling, hence may play an adaptive role in the maintainance of metabolic homeostasis. Following alkali activation, may also be permeable Na(+), K(+), Cs(+) and Li(+). The chain is Proton channel OTOP1 from Rattus norvegicus (Rat).